Here is a 386-residue protein sequence, read N- to C-terminus: Mannitol-1-phosphate 5-dehydrogenase (386 aa).

An NAD(+)-binding site is contributed by 3-14 (AVHFGAGNIGRG).

It belongs to the mannitol dehydrogenase family.

The enzyme catalyses D-mannitol 1-phosphate + NAD(+) = beta-D-fructose 6-phosphate + NADH + H(+). The chain is Mannitol-1-phosphate 5-dehydrogenase from Brevibacillus brevis (strain 47 / JCM 6285 / NBRC 100599).